The primary structure comprises 138 residues: Ribosome-binding factor A (138 aa).

The protein belongs to the RbfA family. Monomer. Binds 30S ribosomal subunits, but not 50S ribosomal subunits or 70S ribosomes.

The protein localises to the cytoplasm. Its function is as follows. One of several proteins that assist in the late maturation steps of the functional core of the 30S ribosomal subunit. Associates with free 30S ribosomal subunits (but not with 30S subunits that are part of 70S ribosomes or polysomes). Required for efficient processing of 16S rRNA. May interact with the 5'-terminal helix region of 16S rRNA. This chain is Ribosome-binding factor A, found in Sodalis glossinidius (strain morsitans).